The chain runs to 335 residues: Hsp90 co-chaperone Cdc37-like 1 (335 aa).

Positions 1-11 (MEQPWPPPGPW) are enriched in pro residues. The interval 1-42 (MEQPWPPPGPWSFPRTGGETEEESDLDVSPSSSHYSPVPDGG) is disordered. The tract at residues 2–170 (EQPWPPPGPW…YEQKIRHFGM (169 aa)) is self-association. The span at 27-40 (DVSPSSSHYSPVPD) shows a compositional bias: low complexity. 2 positions are modified to phosphoserine: serine 32 and serine 88. Residues 84–120 (HNSESLDQEHAKAQTAVSELRQREEEWRQKEEALVQR) are a coiled coil. The segment at 147 to 276 (KTEDEDKSQS…ARVRLYAQSQ (130 aa)) is self-association and interaction with Hsp90. Residues 266 to 335 (KARVRLYAQS…EDDDRMMDTV (70 aa)) form an interaction with Hsp70 region. The interval 277–335 (SFAPVTVENHAPHSGVGCIGSAEPLPQNPDSLQCCPPAPLCSVDSVVHKEDDDRMMDTV) is required for interaction with STIP1.

This sequence belongs to the CDC37 family. As to quaternary structure, self-associates. Forms complexes with Hsp70 and Hsp90. Interacts with CDC37, FKBP4, PPID and STIP1.

The protein resides in the cytoplasm. Its function is as follows. Co-chaperone that binds to numerous proteins and promotes their interaction with Hsp70 and Hsp90. This chain is Hsp90 co-chaperone Cdc37-like 1 (Cdc37l1), found in Rattus norvegicus (Rat).